Consider the following 231-residue polypeptide: Large ribosomal subunit protein uL3 (231 aa).

Residue Q151 is modified to N5-methylglutamine.

The protein belongs to the universal ribosomal protein uL3 family. Part of the 50S ribosomal subunit. Forms a cluster with proteins L14 and L19. In terms of processing, methylated by PrmB.

Functionally, one of the primary rRNA binding proteins, it binds directly near the 3'-end of the 23S rRNA, where it nucleates assembly of the 50S subunit. The chain is Large ribosomal subunit protein uL3 from Ehrlichia canis (strain Jake).